We begin with the raw amino-acid sequence, 329 residues long: Biotin synthase (329 aa).

Residues 38-262 form the Radical SAM core domain; sequence NTIQVSTLLS…IMPHSYIRLS (225 aa). [4Fe-4S] cluster is bound by residues cysteine 53, cysteine 57, and cysteine 60. [2Fe-2S] cluster-binding residues include cysteine 97, cysteine 128, cysteine 188, and arginine 260.

It belongs to the radical SAM superfamily. Biotin synthase family. Homodimer. [4Fe-4S] cluster is required as a cofactor. [2Fe-2S] cluster serves as cofactor.

The enzyme catalyses (4R,5S)-dethiobiotin + (sulfur carrier)-SH + 2 reduced [2Fe-2S]-[ferredoxin] + 2 S-adenosyl-L-methionine = (sulfur carrier)-H + biotin + 2 5'-deoxyadenosine + 2 L-methionine + 2 oxidized [2Fe-2S]-[ferredoxin]. It participates in cofactor biosynthesis; biotin biosynthesis; biotin from 7,8-diaminononanoate: step 2/2. Catalyzes the conversion of dethiobiotin (DTB) to biotin by the insertion of a sulfur atom into dethiobiotin via a radical-based mechanism. The sequence is that of Biotin synthase from Acinetobacter baumannii (strain ACICU).